A 200-amino-acid chain; its full sequence is Shikimate kinase (200 aa).

ATP is bound at residue 41–46 (GVGKSS). Serine 45 contributes to the Mg(2+) binding site. Positions 63, 87, and 109 each coordinate substrate. Arginine 147 contributes to the ATP binding site. Arginine 166 contributes to the substrate binding site.

It belongs to the shikimate kinase family. Monomer. Requires Mg(2+) as cofactor.

The protein localises to the cytoplasm. The enzyme catalyses shikimate + ATP = 3-phosphoshikimate + ADP + H(+). Its pathway is metabolic intermediate biosynthesis; chorismate biosynthesis; chorismate from D-erythrose 4-phosphate and phosphoenolpyruvate: step 5/7. Its function is as follows. Catalyzes the specific phosphorylation of the 3-hydroxyl group of shikimic acid using ATP as a cosubstrate. This Caulobacter vibrioides (strain NA1000 / CB15N) (Caulobacter crescentus) protein is Shikimate kinase.